The primary structure comprises 33 residues: U23-ctenitoxin-Pn1a (33 aa).

Intrachain disulfides connect C3–C16, C10–C21, and C15–C30.

As to expression, expressed by the venom gland.

It is found in the secreted. Non-toxic to mice. This chain is U23-ctenitoxin-Pn1a, found in Phoneutria nigriventer (Brazilian armed spider).